We begin with the raw amino-acid sequence, 260 residues long: MLKSYRAVLVSLSLLFVFVLSGCSNAAPIDAHSTGIWDHYFVYPISFMIQFVAHHIPGASFGIAIIIMTLVIRSAMIPLAVSQYRSQAKMKKMQPELQKLKKKYGDVSKDLEKQKQYQKEMSELMKSGGWNPLAGCWPLLIQMPIFSALYYAISRTEEIRTSSFLWVNLGHADPYHILPIIAALTTFIQMKVFQSNITPGEQVQMLKMQQIMMPAMILFMGFAAPSGLVLYWITGNLFTMTQTIVLRKIMEREELQLQKA.

Residues 1–22 (MLKSYRAVLVSLSLLFVFVLSG) form the signal peptide. Residue Cys23 is the site of N-palmitoyl cysteine attachment. Cys23 is lipidated: S-diacylglycerol cysteine. Helical transmembrane passes span 29-49 (IDAH…SFMI), 52-72 (VAHH…TLVI), 133-153 (LAGC…YYAI), 164-184 (FLWV…IAAL), and 213-233 (MPAM…LYWI).

It belongs to the OXA1/ALB3/YidC family. Type 2 subfamily.

The protein resides in the cell membrane. Functionally, required for the insertion and/or proper folding and/or complex formation of integral membrane proteins into the membrane. Involved in integration of membrane proteins that insert both dependently and independently of the Sec translocase complex, as well as at least some lipoproteins. The chain is Membrane protein insertase YidC 1 from Bacillus cereus (strain ATCC 14579 / DSM 31 / CCUG 7414 / JCM 2152 / NBRC 15305 / NCIMB 9373 / NCTC 2599 / NRRL B-3711).